The chain runs to 237 residues: Ribonuclease PH (237 aa).

Residues Arg-86 and 124–126 contribute to the phosphate site; that span reads GTR.

Belongs to the RNase PH family. As to quaternary structure, homohexameric ring arranged as a trimer of dimers.

The catalysed reaction is tRNA(n+1) + phosphate = tRNA(n) + a ribonucleoside 5'-diphosphate. In terms of biological role, phosphorolytic 3'-5' exoribonuclease that plays an important role in tRNA 3'-end maturation. Removes nucleotide residues following the 3'-CCA terminus of tRNAs; can also add nucleotides to the ends of RNA molecules by using nucleoside diphosphates as substrates, but this may not be physiologically important. Probably plays a role in initiation of 16S rRNA degradation (leading to ribosome degradation) during starvation. This Shewanella oneidensis (strain ATCC 700550 / JCM 31522 / CIP 106686 / LMG 19005 / NCIMB 14063 / MR-1) protein is Ribonuclease PH.